Consider the following 750-residue polypeptide: Serine/threonine-protein kinase PknG (750 aa).

The tract at residues 1–66 is disordered; that stretch reads MAKASETERS…PQDRMATTSR (66 aa). Over residues 17–34 the composition is skewed to polar residues; that stretch reads ADAQTATSATVRPLSTQA. A Protein kinase domain is found at 151 to 396; the sequence is YEVKGCIAHG…EMSAQLTGVL (246 aa). Residues 157–165 and Lys-181 contribute to the ATP site; that span reads IAHGGLGWI. Residue Asp-276 is the Proton acceptor of the active site.

This sequence belongs to the protein kinase superfamily. Ser/Thr protein kinase family. In terms of processing, autophosphorylated.

The catalysed reaction is L-seryl-[protein] + ATP = O-phospho-L-seryl-[protein] + ADP + H(+). The enzyme catalyses L-threonyl-[protein] + ATP = O-phospho-L-threonyl-[protein] + ADP + H(+). The polypeptide is Serine/threonine-protein kinase PknG (pknG) (Mycobacterium bovis (strain ATCC BAA-935 / AF2122/97)).